The primary structure comprises 715 residues: Polyribonucleotide nucleotidyltransferase (715 aa).

2 residues coordinate Mg(2+): Asp493 and Asp499. Residues 560 to 619 (PRMITIKINPEKIRDVIGKGGSVIRALTEETGTTIDISDDGVVTIASTSSEGMAEAKKRI) enclose the KH domain. The S1 motif domain occupies 629–697 (GQVYEGTVLK…EKGRVRLSAK (69 aa)).

Belongs to the polyribonucleotide nucleotidyltransferase family. Mg(2+) is required as a cofactor.

Its subcellular location is the cytoplasm. The enzyme catalyses RNA(n+1) + phosphate = RNA(n) + a ribonucleoside 5'-diphosphate. In terms of biological role, involved in mRNA degradation. Catalyzes the phosphorolysis of single-stranded polyribonucleotides processively in the 3'- to 5'-direction. This is Polyribonucleotide nucleotidyltransferase from Burkholderia multivorans (strain ATCC 17616 / 249).